Reading from the N-terminus, the 347-residue chain is DNA primase small subunit PriS (347 aa).

Active-site residues include aspartate 95 and aspartate 97. Residues cysteine 106, histidine 108, cysteine 114, and cysteine 117 each coordinate Zn(2+). The Zinc knuckle motif motif lies at 106 to 117 (CNHEPGTVCPIC). Aspartate 280 is a catalytic residue.

Belongs to the eukaryotic-type primase small subunit family. Heterodimer of a small subunit (PriS) and a large subunit (PriL). Both participate in formation of the active center, but the ATP-binding site is exclusively located on the small subunit. It depends on Mg(2+) as a cofactor. Mn(2+) serves as cofactor.

Its function is as follows. Catalytic subunit of DNA primase, an RNA polymerase that catalyzes the synthesis of short RNA molecules used as primers for DNA polymerase during DNA replication. The small subunit contains the primase catalytic core and has DNA synthesis activity on its own. Binding to the large subunit stabilizes and modulates the activity, increasing the rate of DNA synthesis while decreasing the length of the DNA fragments, and conferring RNA synthesis capability. The DNA polymerase activity may enable DNA primase to also catalyze primer extension after primer synthesis. May also play a role in DNA repair. The sequence is that of DNA primase small subunit PriS from Pyrococcus furiosus (strain ATCC 43587 / DSM 3638 / JCM 8422 / Vc1).